A 99-amino-acid chain; its full sequence is Large ribosomal subunit protein eL21 (99 aa).

Belongs to the eukaryotic ribosomal protein eL21 family.

The protein is Large ribosomal subunit protein eL21 of Staphylothermus marinus (strain ATCC 43588 / DSM 3639 / JCM 9404 / F1).